Consider the following 292-residue polypeptide: MPAALVENSQVICEVWASNLEEEMRKIREIVLSYSYIAMDTEFPGVVVRPIGEFRSSIDYQYQLLRCNVDLLKIIQLGLTFTNEKGEYPSGINTWQFNFKFNLTEDMYSQDSIDLLANSGLQFQKHEEEGIDTLHFAELLMTSGVVLCDNVKWLSFHSGYDFGYMVKLLTDSRLPEEEHEFFHILNLFFPSIYDVKYLMKSCKNLKGGLQEVADQLDLQRIGRQHQAGSDSLLTGMAFFRMKELFFEDSIDDAKYCGRLYGLGTGVAQKQNEDVDCAQEKMSILAMINNMQQ.

The a divalent metal cation site is built by D40, E42, D161, and D230.

It belongs to the CAF1 family. As to quaternary structure, component of the CCR4-NOT complex; distinct complexes seem to exist that differ in the participation of probably mutually exclusive catalytic subunits; the complex contains two deadenylase subunits, CNOT6 or CNOT6L, and CNOT7 or CNOT8. In the complex interacts directly with CNOT1. Interacts with BTG1, BTG2 and TOB1. Interacts with BTG4.

Its subcellular location is the cytoplasm. It is found in the nucleus. The enzyme catalyses Exonucleolytic cleavage of poly(A) to 5'-AMP.. Has 3'-5' poly(A) exoribonuclease activity for synthetic poly(A) RNA substrate. Its function seems to be partially redundant with that of CNOT7. Catalytic component of the CCR4-NOT complex which is linked to various cellular processes including bulk mRNA degradation, miRNA-mediated repression, translational repression during translational initiation and general transcription regulation. During miRNA-mediated repression the complex also seems to act as translational repressor during translational initiation. Additional complex functions may be a consequence of its influence on mRNA expression. Associates with members of the BTG family such as TOB1 and BTG2 and is required for their anti-proliferative activity. This is CCR4-NOT transcription complex subunit 8 (Cnot8) from Mus musculus (Mouse).